The sequence spans 114 residues: Vacuolar morphogenesis protein 10 (114 aa).

Its subcellular location is the vacuole membrane. Required for vacuolar fusion. Involved in the early steps of the fusion pathway. This chain is Vacuolar morphogenesis protein 10 (VAM10), found in Saccharomyces cerevisiae (strain ATCC 204508 / S288c) (Baker's yeast).